Here is a 168-residue protein sequence, read N- to C-terminus: G/U mismatch-specific DNA glycosylase (168 aa).

It belongs to the uracil-DNA glycosylase (UDG) superfamily. TDG/mug family. Binds DNA as a monomer.

Its subcellular location is the cytoplasm. It carries out the reaction Specifically hydrolyzes mismatched double-stranded DNA and polynucleotides, releasing free uracil.. Excises ethenocytosine and uracil, which can arise by alkylation or deamination of cytosine, respectively, from the corresponding mispairs with guanine in ds-DNA. It is capable of hydrolyzing the carbon-nitrogen bond between the sugar-phosphate backbone of the DNA and the mispaired base. The complementary strand guanine functions in substrate recognition. Required for DNA damage lesion repair in stationary-phase cells. The polypeptide is G/U mismatch-specific DNA glycosylase (Cronobacter sakazakii (strain ATCC BAA-894) (Enterobacter sakazakii)).